Consider the following 420-residue polypeptide: Exodeoxyribonuclease 7 large subunit (420 aa).

It belongs to the XseA family. As to quaternary structure, heterooligomer composed of large and small subunits.

The protein localises to the cytoplasm. The catalysed reaction is Exonucleolytic cleavage in either 5'- to 3'- or 3'- to 5'-direction to yield nucleoside 5'-phosphates.. Bidirectionally degrades single-stranded DNA into large acid-insoluble oligonucleotides, which are then degraded further into small acid-soluble oligonucleotides. This chain is Exodeoxyribonuclease 7 large subunit, found in Helicobacter acinonychis (strain Sheeba).